An 85-amino-acid polypeptide reads, in one-letter code: Keratin-associated protein 7-1 (85 aa).

Residues 37 to 82 (GSPLGYGCNGYSSLGYGFGGSSFSNLGCGYGGSFYRPWGSGSGFGY) form a 12 X 2 AA repeats of G-[YCGS] region.

This sequence belongs to the KRTAP type 7 family. Interacts with wool keratins. In terms of tissue distribution, wool.

In the wool cortex, wool keratin intermediate filaments are embedded in an interfilamentous matrix, consisting of hair keratin-associated proteins (KRTAP), which are essential for the formation of a rigid and resistant wool shaft through their extensive disulfide bond cross-linking with abundant cysteine residues of wool keratins. The matrix proteins include the high-sulfur and high-glycine-tyrosine keratins. This Ovis aries (Sheep) protein is Keratin-associated protein 7-1 (KRTAP7-1).